The sequence spans 392 residues: Major outer membrane porin (392 aa).

The N-terminal stretch at 1-22 (MKKLLKSALLFAAAGSALSLQA) is a signal peptide.

Belongs to the chlamydial porin (CP) (TC 1.B.2) family. In terms of assembly, part of a disulfide cross-linked outer membrane complex (COMC) composed of the major outer membrane porin (MOMP), the small cysteine-rich protein (OmcA) and the large cysteine-rich periplasmic protein (OmcB).

The protein resides in the cell outer membrane. In terms of biological role, in elementary bodies (EBs, the infectious stage, which is able to survive outside the host cell) provides the structural integrity of the outer envelope through disulfide cross-links with the small cysteine-rich protein and the large cysteine-rich periplasmic protein. It has been described in publications as the Sarkosyl-insoluble COMC (Chlamydia outer membrane complex), and serves as the functional equivalent of peptidoglycan. Permits diffusion of specific solutes through the outer membrane. This is Major outer membrane porin (ompA) from Chlamydia psittaci (Chlamydophila psittaci).